An 88-amino-acid chain; its full sequence is Small ribosomal subunit protein bS20 (88 aa).

Disordered regions lie at residues methionine 1–alanine 23 and glycine 65–alanine 88.

The protein belongs to the bacterial ribosomal protein bS20 family.

Functionally, binds directly to 16S ribosomal RNA. In Rhizobium meliloti (strain 1021) (Ensifer meliloti), this protein is Small ribosomal subunit protein bS20.